The primary structure comprises 386 residues: Ribonuclease D (386 aa).

The 3'-5' exonuclease domain maps to 3 to 174 (HTITTTDELA…EIYEYLSAEL (172 aa)). Positions 213–294 (SGRVVAIAQQ…ARGMSVPNSE (82 aa)) constitute an HRDC domain.

The protein belongs to the RNase D family. It depends on a divalent metal cation as a cofactor.

The protein resides in the cytoplasm. The enzyme catalyses Exonucleolytic cleavage that removes extra residues from the 3'-terminus of tRNA to produce 5'-mononucleotides.. In terms of biological role, exonuclease involved in the 3' processing of various precursor tRNAs. Initiates hydrolysis at the 3'-terminus of an RNA molecule and releases 5'-mononucleotides. In Jannaschia sp. (strain CCS1), this protein is Ribonuclease D.